Consider the following 315-residue polypeptide: Ribosomal RNA small subunit methyltransferase H (315 aa).

The segment at 1–21 (MNVVNVVPMHLPPPPPRPRGE) is disordered. S-adenosyl-L-methionine is bound by residues 51–53 (GGH), Asp-69, Phe-96, Asp-117, and Gln-124. Residues 281–315 (KKPVTAGDDEVEGNPRARSAKLRAARRVGGAEALA) are disordered.

Belongs to the methyltransferase superfamily. RsmH family.

It localises to the cytoplasm. It catalyses the reaction cytidine(1402) in 16S rRNA + S-adenosyl-L-methionine = N(4)-methylcytidine(1402) in 16S rRNA + S-adenosyl-L-homocysteine + H(+). In terms of biological role, specifically methylates the N4 position of cytidine in position 1402 (C1402) of 16S rRNA. In Sorangium cellulosum (strain So ce56) (Polyangium cellulosum (strain So ce56)), this protein is Ribosomal RNA small subunit methyltransferase H.